A 267-amino-acid chain; its full sequence is Ribosomal RNA small subunit methyltransferase A (267 aa).

Residues N18, L20, G45, E66, D91, and N112 each contribute to the S-adenosyl-L-methionine site.

It belongs to the class I-like SAM-binding methyltransferase superfamily. rRNA adenine N(6)-methyltransferase family. RsmA subfamily.

The protein localises to the cytoplasm. It catalyses the reaction adenosine(1518)/adenosine(1519) in 16S rRNA + 4 S-adenosyl-L-methionine = N(6)-dimethyladenosine(1518)/N(6)-dimethyladenosine(1519) in 16S rRNA + 4 S-adenosyl-L-homocysteine + 4 H(+). Specifically dimethylates two adjacent adenosines (A1518 and A1519) in the loop of a conserved hairpin near the 3'-end of 16S rRNA in the 30S particle. May play a critical role in biogenesis of 30S subunits. This is Ribosomal RNA small subunit methyltransferase A from Shewanella sediminis (strain HAW-EB3).